The chain runs to 83 residues: Beta/kappa-theraphotoxin-Cg2a (83 aa).

An N-terminal signal peptide occupies residues 1–21; sequence MKASVFAVILGLVVLCACSFA. Residues 22–53 constitute a propeptide that is removed on maturation; the sequence is EDEQDQFVSPNELLKSMFVESRHEFTPEVEGR. Intrachain disulfides connect cysteine 55–cysteine 69, cysteine 62–cysteine 74, and cysteine 68–cysteine 78. The residue at position 82 (isoleucine 82) is an Isoleucine amide.

Belongs to the neurotoxin 30 (phrixotoxin) family. As to expression, expressed by the venom gland.

Its subcellular location is the secreted. This gating-modifier toxin shows an important inhibitory activity on sodium channels. It is very active on Nav1.7/SCN9A (IC(50)~0.6 nM), and also shows activity on Nav1.3/SCN3A (IC(50)=292 nM), Nav1.4/SCN4A (IC(50)=2.2-159 nM), and Nav1.5/SCN5A (IC(50)=2.3-2.9 uM). It has also been shown to inhibit tetrodotoxin (TTX)-resistant (IC(50)=27.6 nM) and TTX-sensitive (IC(50)=30.2 nM) sodium channels in rat dorsal root ganglion neurons. Lower inhibitory activity has also been shown on potassium channels: Kv4.2/KCND2 (IC(50)=604.2 nM), Kv4.3/KCND3 (IC(50)=425.1 nM), and Kv2.1/KCNB1 (IC(50)=14.3 uM). It binds to phospholipid membranes. Like its analog AM-8145, it may act by interacting only with the second voltage-sensor domain of Nav1.7/SCN9A. This Chilobrachys guangxiensis (Chinese earth tiger tarantula) protein is Beta/kappa-theraphotoxin-Cg2a.